Consider the following 275-residue polypeptide: 3-methyl-2-oxobutanoate hydroxymethyltransferase (275 aa).

Positions 49 and 88 each coordinate Mg(2+). 3-methyl-2-oxobutanoate contacts are provided by residues 49-50, Asp88, and Lys118; that span reads DS. Glu120 serves as a coordination point for Mg(2+). Glu187 acts as the Proton acceptor in catalysis.

The protein belongs to the PanB family. As to quaternary structure, homodecamer; pentamer of dimers. The cofactor is Mg(2+).

The protein localises to the cytoplasm. The enzyme catalyses 3-methyl-2-oxobutanoate + (6R)-5,10-methylene-5,6,7,8-tetrahydrofolate + H2O = 2-dehydropantoate + (6S)-5,6,7,8-tetrahydrofolate. The protein operates within cofactor biosynthesis; (R)-pantothenate biosynthesis; (R)-pantoate from 3-methyl-2-oxobutanoate: step 1/2. Functionally, catalyzes the reversible reaction in which hydroxymethyl group from 5,10-methylenetetrahydrofolate is transferred onto alpha-ketoisovalerate to form ketopantoate. The chain is 3-methyl-2-oxobutanoate hydroxymethyltransferase from Rhodospirillum centenum (strain ATCC 51521 / SW).